The primary structure comprises 345 residues: Ferrochelatase (345 aa).

Residues His-192 and Glu-295 each coordinate Fe cation.

This sequence belongs to the ferrochelatase family.

It is found in the cytoplasm. It catalyses the reaction heme b + 2 H(+) = protoporphyrin IX + Fe(2+). The protein operates within porphyrin-containing compound metabolism; protoheme biosynthesis; protoheme from protoporphyrin-IX: step 1/1. Functionally, catalyzes the ferrous insertion into protoporphyrin IX. The polypeptide is Ferrochelatase (Opitutus terrae (strain DSM 11246 / JCM 15787 / PB90-1)).